Here is a 261-residue protein sequence, read N- to C-terminus: Cytochrome c oxidase subunit 3 (261 aa).

The Mitochondrial matrix portion of the chain corresponds to M1–P15. A helical membrane pass occupies residues W16 to W34. Topologically, residues F35–T40 are mitochondrial intermembrane. Residues T41–T66 traverse the membrane as a helical segment. The Mitochondrial matrix segment spans residues F67–T72. The chain crosses the membrane as a helical span at residues P73–S105. Residues L106–E128 lie on the Mitochondrial intermembrane side of the membrane. Residues V129–M152 form a helical membrane-spanning segment. Over E153–E155 the chain is Mitochondrial matrix. Residues R156–E183 form a helical membrane-spanning segment. Residues A184 to D190 lie on the Mitochondrial intermembrane side of the membrane. The helical transmembrane segment at G191 to I223 threads the bilayer. The Mitochondrial matrix segment spans residues Q224–H232. A helical transmembrane segment spans residues F233–I256. Residues Y257 to S261 lie on the Mitochondrial intermembrane side of the membrane.

This sequence belongs to the cytochrome c oxidase subunit 3 family. In terms of assembly, component of the cytochrome c oxidase (complex IV, CIV), a multisubunit enzyme composed of 14 subunits. The complex is composed of a catalytic core of 3 subunits MT-CO1, MT-CO2 and MT-CO3, encoded in the mitochondrial DNA, and 11 supernumerary subunits COX4I, COX5A, COX5B, COX6A, COX6B, COX6C, COX7A, COX7B, COX7C, COX8 and NDUFA4, which are encoded in the nuclear genome. The complex exists as a monomer or a dimer and forms supercomplexes (SCs) in the inner mitochondrial membrane with NADH-ubiquinone oxidoreductase (complex I, CI) and ubiquinol-cytochrome c oxidoreductase (cytochrome b-c1 complex, complex III, CIII), resulting in different assemblies (supercomplex SCI(1)III(2)IV(1) and megacomplex MCI(2)III(2)IV(2)).

The protein localises to the mitochondrion inner membrane. It catalyses the reaction 4 Fe(II)-[cytochrome c] + O2 + 8 H(+)(in) = 4 Fe(III)-[cytochrome c] + 2 H2O + 4 H(+)(out). In terms of biological role, component of the cytochrome c oxidase, the last enzyme in the mitochondrial electron transport chain which drives oxidative phosphorylation. The respiratory chain contains 3 multisubunit complexes succinate dehydrogenase (complex II, CII), ubiquinol-cytochrome c oxidoreductase (cytochrome b-c1 complex, complex III, CIII) and cytochrome c oxidase (complex IV, CIV), that cooperate to transfer electrons derived from NADH and succinate to molecular oxygen, creating an electrochemical gradient over the inner membrane that drives transmembrane transport and the ATP synthase. Cytochrome c oxidase is the component of the respiratory chain that catalyzes the reduction of oxygen to water. Electrons originating from reduced cytochrome c in the intermembrane space (IMS) are transferred via the dinuclear copper A center (CU(A)) of subunit 2 and heme A of subunit 1 to the active site in subunit 1, a binuclear center (BNC) formed by heme A3 and copper B (CU(B)). The BNC reduces molecular oxygen to 2 water molecules using 4 electrons from cytochrome c in the IMS and 4 protons from the mitochondrial matrix. The sequence is that of Cytochrome c oxidase subunit 3 (mt-co3) from Carassius auratus (Goldfish).